Here is a 158-residue protein sequence, read N- to C-terminus: Large ribosomal subunit protein uL16 (158 aa).

The protein belongs to the universal ribosomal protein uL16 family. Part of the 50S ribosomal subunit.

Binds 23S rRNA and is also seen to make contacts with the A and possibly P site tRNAs. The polypeptide is Large ribosomal subunit protein uL16 (Parasynechococcus marenigrum (strain WH8102)).